We begin with the raw amino-acid sequence, 271 residues long: Orotidine 5'-phosphate decarboxylase (271 aa).

Lysine 95 functions as the Proton donor in the catalytic mechanism.

The protein belongs to the OMP decarboxylase family. Type 2 subfamily.

It catalyses the reaction orotidine 5'-phosphate + H(+) = UMP + CO2. The protein operates within pyrimidine metabolism; UMP biosynthesis via de novo pathway; UMP from orotate: step 2/2. This chain is Orotidine 5'-phosphate decarboxylase (pyrF), found in Ralstonia nicotianae (strain ATCC BAA-1114 / GMI1000) (Ralstonia solanacearum).